Consider the following 314-residue polypeptide: Probable cell division protein WhiA (314 aa).

The H-T-H motif DNA-binding region spans 274–308 (SLKELGEMVSTGPISKSGMNHRLRKLNELADKIRN).

Belongs to the WhiA family.

Involved in cell division and chromosome segregation. This Staphylococcus epidermidis (strain ATCC 35984 / DSM 28319 / BCRC 17069 / CCUG 31568 / BM 3577 / RP62A) protein is Probable cell division protein WhiA.